A 552-amino-acid polypeptide reads, in one-letter code: Urocanate hydratase (552 aa).

NAD(+) contacts are provided by residues 49-50 (GG), Gln-127, 173-175 (GMG), Asp-193, 239-240 (NA), 260-264 (QTSAH), 270-271 (YI), and Tyr-319. Cys-407 is an active-site residue. Gly-489 contributes to the NAD(+) binding site.

It belongs to the urocanase family. NAD(+) is required as a cofactor.

The protein resides in the cytoplasm. The enzyme catalyses 4-imidazolone-5-propanoate = trans-urocanate + H2O. Its pathway is amino-acid degradation; L-histidine degradation into L-glutamate; N-formimidoyl-L-glutamate from L-histidine: step 2/3. Functionally, catalyzes the conversion of urocanate to 4-imidazolone-5-propionate. The sequence is that of Urocanate hydratase from Bacillus cereus (strain B4264).